A 467-amino-acid chain; its full sequence is Glutamate--tRNA ligase 2 (467 aa).

Positions 18–28 (PSPTGYLHVGG) match the 'HIGH' region motif. Residues 238–242 (PLSKR) carry the 'KMSKS' region motif. Lys241 contributes to the ATP binding site.

It belongs to the class-I aminoacyl-tRNA synthetase family. Glutamate--tRNA ligase type 1 subfamily. As to quaternary structure, monomer.

It is found in the cytoplasm. It catalyses the reaction tRNA(Glu) + L-glutamate + ATP = L-glutamyl-tRNA(Glu) + AMP + diphosphate. Functionally, catalyzes the attachment of glutamate to tRNA(Glu) in a two-step reaction: glutamate is first activated by ATP to form Glu-AMP and then transferred to the acceptor end of tRNA(Glu). This chain is Glutamate--tRNA ligase 2, found in Fervidobacterium nodosum (strain ATCC 35602 / DSM 5306 / Rt17-B1).